A 485-amino-acid chain; its full sequence is ATP synthase subunit beta 2 (485 aa).

Positions 1–10 (MSGMGEKSEQ) are enriched in basic and acidic residues. The tract at residues 1–27 (MSGMGEKSEQISKSARSTDPQEQESVA) is disordered. Residues 11-24 (ISKSARSTDPQEQE) show a composition bias toward polar residues. Position 177–184 (177–184 (GGAGVGKT)) interacts with ATP.

It belongs to the ATPase alpha/beta chains family. As to quaternary structure, F-type ATPases have 2 components, CF(1) - the catalytic core - and CF(0) - the membrane proton channel. CF(1) has five subunits: alpha(3), beta(3), gamma(1), delta(1), epsilon(1). CF(0) has three main subunits: a(1), b(2) and c(9-12). The alpha and beta chains form an alternating ring which encloses part of the gamma chain. CF(1) is attached to CF(0) by a central stalk formed by the gamma and epsilon chains, while a peripheral stalk is formed by the delta and b chains.

It localises to the cell inner membrane. The catalysed reaction is ATP + H2O + 4 H(+)(in) = ADP + phosphate + 5 H(+)(out). In terms of biological role, produces ATP from ADP in the presence of a proton gradient across the membrane. The catalytic sites are hosted primarily by the beta subunits. The sequence is that of ATP synthase subunit beta 2 from Nitrosomonas eutropha (strain DSM 101675 / C91 / Nm57).